A 160-amino-acid polypeptide reads, in one-letter code: Cytochrome c-type biogenesis protein CcmE (160 aa).

Over 1–8 (MNPRRKKR) the chain is Cytoplasmic. Residues 9–29 (LGIILAIFFGISATVGLMVYA) traverse the membrane as a helical; Signal-anchor for type II membrane protein segment. At 30 to 160 (LNQNMDLFYT…TTEQKEGNAQ (131 aa)) the chain is on the periplasmic side. Heme-binding residues include histidine 128 and tyrosine 132.

This sequence belongs to the CcmE/CycJ family.

It is found in the cell inner membrane. Functionally, heme chaperone required for the biogenesis of c-type cytochromes. Transiently binds heme delivered by CcmC and transfers the heme to apo-cytochromes in a process facilitated by CcmF and CcmH. This is Cytochrome c-type biogenesis protein CcmE from Vibrio atlanticus (strain LGP32) (Vibrio splendidus (strain Mel32)).